The chain runs to 91 residues: Apolipoprotein C-III (91 aa).

Positions 1-20 (MQPRVLLAVTLLALLVSARA) are cleaved as a signal peptide. The residue at position 63 (M63) is a Methionine sulfoxide. Positions 68-91 (DSMKGYWTSLIGRLSGFLDSTPSS) are lipid-binding.

It belongs to the apolipoprotein C3 family.

The protein resides in the secreted. Component of triglyceride-rich very low density lipoproteins (VLDL) and high density lipoproteins (HDL) in plasma. Plays a multifaceted role in triglyceride homeostasis. Intracellularly, promotes hepatic very low density lipoprotein 1 (VLDL1) assembly and secretion; extracellularly, attenuates hydrolysis and clearance of triglyceride-rich lipoproteins (TRLs). Impairs the lipolysis of TRLs by inhibiting lipoprotein lipase and the hepatic uptake of TRLs by remnant receptors. Formed of several curved helices connected via semiflexible hinges, so that it can wrap tightly around the curved micelle surface and easily adapt to the different diameters of its natural binding partners. In Cavia porcellus (Guinea pig), this protein is Apolipoprotein C-III (APOC3).